The primary structure comprises 120 residues: Thiosulfate sulfurtransferase 16, chloroplastic (120 aa).

The Rhodanese domain occupies 20 to 120; the sequence is LLAGHRYLDV…WAKNGLPTKA (101 aa). The active-site Cysteine persulfide intermediate is the Cys80. Arg85 is a substrate binding site.

As to quaternary structure, monomer.

It localises to the plastid. The protein resides in the chloroplast. The enzyme catalyses thiosulfate + hydrogen cyanide = thiocyanate + sulfite + 2 H(+). Functionally, thought to act during the early stages of leaf senescence. Catalyzes the transfer of a sulfur ion from a donor to cyanide or to other thiol compounds. Substrate preference is thiosulfate &gt; 3-mercaptopyruvate. The sequence is that of Thiosulfate sulfurtransferase 16, chloroplastic (STR16) from Arabidopsis thaliana (Mouse-ear cress).